We begin with the raw amino-acid sequence, 207 residues long: Phenazine biosynthesis protein PhzD (207 aa).

The active-site Proton donor is the aspartate 38. Residues glutamine 78, arginine 87, lysine 122, and 151-155 (YAHVG) contribute to the substrate site.

It belongs to the isochorismatase family. In terms of assembly, homodimer.

It catalyses the reaction (2S)-2-amino-4-deoxychorismate + H2O = (5S,6S)-6-amino-5-hydroxycyclohexa-1,3-diene-1-carboxyate + pyruvate. It participates in antibiotic biosynthesis; phenazine biosynthesis. In terms of biological role, involved in the biosynthesis of the antibiotic phenazine, a nitrogen-containing heterocyclic molecule having important roles in virulence, competition and biological control. Catalyzes the hydrolysis of the vinyl ether functional group of 2-amino-2-deoxyisochorismate (ADIC), yielding pyruvate and trans-2,3-dihydro-3-hydroxyanthranilic acid (DHHA). The chain is Phenazine biosynthesis protein PhzD from Pseudomonas fluorescens.